We begin with the raw amino-acid sequence, 329 residues long: Phosphoenolpyruvate transferase (329 aa).

Asp61 is a binding site for 7,8-didemethyl-8-hydroxy-5-deazariboflavin.

Belongs to the CofD family. As to quaternary structure, homodimer. Requires Mg(2+) as cofactor.

The enzyme catalyses enolpyruvoyl-2-diphospho-5'-guanosine + 7,8-didemethyl-8-hydroxy-5-deazariboflavin = dehydro coenzyme F420-0 + GMP + H(+). The protein operates within cofactor biosynthesis; coenzyme F420 biosynthesis. Catalyzes the transfer of the phosphoenolpyruvate moiety from enoylpyruvoyl-2-diphospho-5'-guanosine (EPPG) to 7,8-didemethyl-8-hydroxy-5-deazariboflavin (FO) with the formation of dehydro coenzyme F420-0 and GMP. The protein is Phosphoenolpyruvate transferase of Mycobacterium marinum (strain ATCC BAA-535 / M).